The primary structure comprises 79 residues: Major outer membrane lipoprotein Lpp 2 (79 aa).

Residues 1 to 21 form the signal peptide; it reads MNRTNKLILGAVVLGSTLLAG. A lipid anchor (N-palmitoyl cysteine) is attached at cysteine 22. The S-diacylglycerol cysteine moiety is linked to residue cysteine 22. Repeats lie at residues 25 to 35 and 39 to 49; these read NAKIDQLSSDV and SAKVDQLSNDV. Residues 28 to 69 are a coiled coil; it reads IDQLSSDVQTLSAKVDQLSNDVNAMRSDVQAAKDDAARANQR. Residue lysine 79 is modified to N6-murein peptidoglycan lysine.

The protein belongs to the Lpp family. As to quaternary structure, homotrimer.

Its subcellular location is the cell outer membrane. The protein localises to the secreted. It localises to the cell wall. Its function is as follows. A highly abundant outer membrane lipoprotein that controls the distance between the inner and outer membranes. The only protein known to be covalently linked to the peptidoglycan network (PGN). Also non-covalently binds the PGN. The link between the cell outer membrane and PGN contributes to maintenance of the structural and functional integrity of the cell envelope, and maintains the correct distance between the PGN and the outer membrane. The chain is Major outer membrane lipoprotein Lpp 2 from Salmonella typhi.